The following is a 428-amino-acid chain: uncharacterized protein (428 aa).

Residue His-68 coordinates Zn(2+). The active-site Proton acceptor is the Glu-71. Zn(2+)-binding residues include His-72 and Glu-143.

This sequence belongs to the peptidase M16 family. Zn(2+) serves as cofactor.

This is an uncharacterized protein from Bacillus subtilis (strain 168).